Reading from the N-terminus, the 451-residue chain is UPF0210 protein CA_C0479 (451 aa).

The protein belongs to the UPF0210 family. Homodimer.

The protein is UPF0210 protein CA_C0479 of Clostridium acetobutylicum (strain ATCC 824 / DSM 792 / JCM 1419 / IAM 19013 / LMG 5710 / NBRC 13948 / NRRL B-527 / VKM B-1787 / 2291 / W).